The primary structure comprises 78 residues: MWIFPLKPSIKKTQVYTGIVKRSRIITACSHVICVLGIIVGDEVVRLHGKCADIFMIFLVINEPFLFVFVRYFNYADS.

2 helical membrane-spanning segments follow: residues 25–45 (IITACSHVICVLGIIVGDEVV) and 50–70 (KCADIFMIFLVINEPFLFVFV).

The protein localises to the membrane. This is an uncharacterized protein from Saccharomyces cerevisiae (strain ATCC 204508 / S288c) (Baker's yeast).